The sequence spans 451 residues: Tubulin gamma-1 chain (451 aa).

Position 131 is a phosphoserine; by BRSK1 (S131). Residue A142 to G148 coordinates GTP.

It belongs to the tubulin family. As to quaternary structure, component of the gamma-tubulin ring complex (gTuRC) consisting of TUBGCP2, TUBGCP3, TUBGCP4, TUBGCP5 and TUBGCP6 and gamma-tubulin TUBG1 or TUBG2. TUBGCP2, TUBGCP3, TUBGCP4, TUBGCP5 and TUBGCP6 assemble in a 5:5:2:1:1 stoichiometry; each is associated with a gamma-tubulin, thereby arranging 14 gamma-tubulins in a helical manner. Gamma-tubulin at the first position is blocked by TUBGCP3 at the last position, allowing 13 protafilaments to grow into a microtubule. The gTuRC (via TUBGCP3 and TUBGCP6) interacts with ACTB and MZT1; the interactions form a luminal bridge that stabilizes the initial structure during complex assembly. The gTuRC (via TUBGCP2) interacts with MZT2A/MZT2B and CDK5RAP2 (via CM1 motif); the interactions play a role in gTuRC activation. Interacts with alpha-beta tubulin heterodimers; the interaction allows microtubules to nucleate from the gTuRC. Interacts with B9D2. Interacts with CDK5RAP2; the interaction is leading to centrosomal localization of TUBG1 and CDK5RAP2. Interacts with CIMAP3. Interacts with SAS6 and NUP62 at the centrosome. Interacts with EML3 (phosphorylated at 'Thr-881') and HAUS8. Interacts with DNM2; this interaction may participate in centrosome cohesion. Interacts with CCDC66. In terms of processing, phosphorylation at Ser-131 by BRSK1 regulates centrosome duplication, possibly by mediating relocation of gamma-tubulin and its associated proteins from the cytoplasm to the centrosome.

Its subcellular location is the cytoplasm. The protein resides in the cytoskeleton. It is found in the microtubule organizing center. It localises to the centrosome. The protein localises to the spindle. Its function is as follows. Tubulin is the major constituent of microtubules, protein filaments consisting of alpha- and beta-tubulin heterodimers. Gamma-tubulin is a key component of the gamma-tubulin ring complex (gTuRC) which mediates microtubule nucleation. The gTuRC regulates the minus-end nucleation of alpha-beta tubulin heterodimers that grow into microtubule protafilaments, a critical step in centrosome duplication and spindle formation. The sequence is that of Tubulin gamma-1 chain from Mus musculus (Mouse).